The following is a 283-amino-acid chain: MQALYDVPAPAKLNLFLHVTGRRPDGYHLLQSVFMLIDWCDVLHFEVRGNGTVTREDLTSALPADDLVVRAARALQKATGCPQGVHIGVSKHIPAQAGLGGGSSDAASTLLALNRLWKLKLSRQQLHSIALTLGADVPFFLCGASAWVEGIGDIIRRLELEHQLPPAAFAVVKPEAGLDTRMIFSHPSLKRDSSCATISGFAATHYQFGSNDLQPVAQALCPEITQAINWLESKGLQGRMTGSGSAVFAQITHAVDLHDAPAAWHVKVCENLKSHPLADWVFG.

The active site involves lysine 12. ATP is bound at residue 94–104 (PAQAGLGGGSS). The active site involves aspartate 136.

The protein belongs to the GHMP kinase family. IspE subfamily.

The enzyme catalyses 4-CDP-2-C-methyl-D-erythritol + ATP = 4-CDP-2-C-methyl-D-erythritol 2-phosphate + ADP + H(+). The protein operates within isoprenoid biosynthesis; isopentenyl diphosphate biosynthesis via DXP pathway; isopentenyl diphosphate from 1-deoxy-D-xylulose 5-phosphate: step 3/6. Functionally, catalyzes the phosphorylation of the position 2 hydroxy group of 4-diphosphocytidyl-2C-methyl-D-erythritol. In Acidovorax ebreus (strain TPSY) (Diaphorobacter sp. (strain TPSY)), this protein is 4-diphosphocytidyl-2-C-methyl-D-erythritol kinase.